Consider the following 346-residue polypeptide: Small ribosomal subunit biogenesis GTPase RsgA (346 aa).

The region spanning 98-261 (VQGGRGPQLA…VIDTPGMRTL (164 aa)) is the CP-type G domain. Residues 148–151 (TKAD) and 200–208 (GSSGVGKST) each bind GTP. Zn(2+) is bound by residues Cys284, Cys289, His291, and Cys297. The segment at 317-346 (RKLSDENQHNTPVQSGPRGAKSPAGRGKRR) is disordered.

The protein belongs to the TRAFAC class YlqF/YawG GTPase family. RsgA subfamily. As to quaternary structure, monomer. Associates with 30S ribosomal subunit, binds 16S rRNA. Zn(2+) is required as a cofactor.

Its subcellular location is the cytoplasm. Its function is as follows. One of several proteins that assist in the late maturation steps of the functional core of the 30S ribosomal subunit. Helps release RbfA from mature subunits. May play a role in the assembly of ribosomal proteins into the subunit. Circularly permuted GTPase that catalyzes slow GTP hydrolysis, GTPase activity is stimulated by the 30S ribosomal subunit. This Mesorhizobium japonicum (strain LMG 29417 / CECT 9101 / MAFF 303099) (Mesorhizobium loti (strain MAFF 303099)) protein is Small ribosomal subunit biogenesis GTPase RsgA.